A 570-amino-acid chain; its full sequence is Grayanic acid biosynthesis cluster cytochrome P450 monooxygenase (570 aa).

Residues Ile-9 to Ile-29 traverse the membrane as a helical segment. The N-linked (GlcNAc...) asparagine glycan is linked to Asn-191. A heme-binding site is contributed by Cys-510.

This sequence belongs to the cytochrome P450 family. It depends on heme as a cofactor.

It localises to the membrane. The protein operates within secondary metabolite biosynthesis. Its function is as follows. Non-reducing polyketide synthase; part of the gene cluster that mediates the biosynthesis of orcinol depsidone grayanic acid (GRA), the only major secondary metabolite known in C.grayi. The first step consists in the ring and depside synthesis by PKS16 leading to 4-O-demethylsphaerophorin, involving different orcinol-like rings, one with acetyl CoA and the other with octanoyl CoA as the starter. Further depsidone formation by the GRA cluster-specific cytochrome P450 leads to 4-O-demethylgrayanic acid. Finally, the cluster specific O-methyltransferase probably converts the 4-O-demethylgrayanic acid into grayanic acid. The chain is Grayanic acid biosynthesis cluster cytochrome P450 monooxygenase from Cladonia grayi (Gray's cup lichen).